The chain runs to 526 residues: Lysine--tRNA ligase (526 aa).

E431 and E438 together coordinate Mg(2+).

It belongs to the class-II aminoacyl-tRNA synthetase family. As to quaternary structure, homodimer. It depends on Mg(2+) as a cofactor.

The protein resides in the cytoplasm. It carries out the reaction tRNA(Lys) + L-lysine + ATP = L-lysyl-tRNA(Lys) + AMP + diphosphate. The protein is Lysine--tRNA ligase of Chlamydia trachomatis serovar L2b (strain UCH-1/proctitis).